The sequence spans 257 residues: Glutamate racemase (257 aa).

Substrate contacts are provided by residues 12-13 (DS) and 44-45 (YG). Cys75 acts as the Proton donor/acceptor in catalysis. 76–77 (NT) is a binding site for substrate. Catalysis depends on Cys176, which acts as the Proton donor/acceptor. Residue 177 to 178 (TH) coordinates substrate.

The protein belongs to the aspartate/glutamate racemases family.

The catalysed reaction is L-glutamate = D-glutamate. The protein operates within cell wall biogenesis; peptidoglycan biosynthesis. In terms of biological role, provides the (R)-glutamate required for cell wall biosynthesis. The protein is Glutamate racemase of Thermus thermophilus (strain ATCC BAA-163 / DSM 7039 / HB27).